The sequence spans 1931 residues: Cytadherence high molecular weight protein 2 (1931 aa).

3 coiled-coil regions span residues 1626-1659, 1768-1846, and 1903-1930; these read KEHQWALEEANKKNSRLAKQLKQLKHHKQALTES, FNTQ…IKTN, and HAKKERINQLANEIKTIKELIEKRKQTS.

Component of the cytoskeleton-like structure which stabilizes the shape of the wall-less Mycoplasma. This cytoskeleton-like network of accessory proteins containing HMW proteins 1 to 5 allows the proper anchoring of cytadhesin proteins in the mycoplasmal membrane at the attachment organelle. In Mycoplasmoides gallisepticum (strain R(low / passage 15 / clone 2)) (Mycoplasma gallisepticum), this protein is Cytadherence high molecular weight protein 2 (hlp2).